Consider the following 447-residue polypeptide: Trigger factor (447 aa).

A PPIase FKBP-type domain is found at 159–244 (GDMLLMQVES…VREIKEEKLP (86 aa)).

It belongs to the FKBP-type PPIase family. Tig subfamily.

It is found in the cytoplasm. The catalysed reaction is [protein]-peptidylproline (omega=180) = [protein]-peptidylproline (omega=0). Involved in protein export. Acts as a chaperone by maintaining the newly synthesized protein in an open conformation. Functions as a peptidyl-prolyl cis-trans isomerase. The sequence is that of Trigger factor from Dehalococcoides mccartyi (strain CBDB1).